We begin with the raw amino-acid sequence, 382 residues long: UDP-4-amino-4-deoxy-L-arabinose--oxoglutarate aminotransferase (382 aa).

Residue Lys-183 is modified to N6-(pyridoxal phosphate)lysine.

This sequence belongs to the DegT/DnrJ/EryC1 family. ArnB subfamily. As to quaternary structure, homodimer. Requires pyridoxal 5'-phosphate as cofactor.

The catalysed reaction is UDP-4-amino-4-deoxy-beta-L-arabinose + 2-oxoglutarate = UDP-beta-L-threo-pentopyranos-4-ulose + L-glutamate. The protein operates within nucleotide-sugar biosynthesis; UDP-4-deoxy-4-formamido-beta-L-arabinose biosynthesis; UDP-4-deoxy-4-formamido-beta-L-arabinose from UDP-alpha-D-glucuronate: step 2/3. Its pathway is bacterial outer membrane biogenesis; lipopolysaccharide biosynthesis. In terms of biological role, catalyzes the conversion of UDP-4-keto-arabinose (UDP-Ara4O) to UDP-4-amino-4-deoxy-L-arabinose (UDP-L-Ara4N). The modified arabinose is attached to lipid A and is required for resistance to polymyxin and cationic antimicrobial peptides. The sequence is that of UDP-4-amino-4-deoxy-L-arabinose--oxoglutarate aminotransferase from Pseudomonas aeruginosa (strain UCBPP-PA14).